The following is a 123-amino-acid chain: Large ribosomal subunit protein uL14 (123 aa).

The protein belongs to the universal ribosomal protein uL14 family. In terms of assembly, part of the 50S ribosomal subunit. Forms a cluster with proteins L3 and L19. In the 70S ribosome, L14 and L19 interact and together make contacts with the 16S rRNA in bridges B5 and B8.

Functionally, binds to 23S rRNA. Forms part of two intersubunit bridges in the 70S ribosome. The protein is Large ribosomal subunit protein uL14 of Cronobacter sakazakii (strain ATCC BAA-894) (Enterobacter sakazakii).